The primary structure comprises 490 residues: Cardiolipin synthase 1 (490 aa).

2 helical membrane-spanning segments follow: residues 9 to 29 (ILTI…FVII) and 42 to 62 (WAWL…YLFL). PLD phosphodiesterase domains lie at 225 to 252 (MNNR…GDDY) and 403 to 430 (QNGF…DFRS). Catalysis depends on residues His230, Lys232, Asp237, His408, Lys410, and Asp415.

It belongs to the phospholipase D family. Cardiolipin synthase subfamily.

The protein localises to the cell membrane. It carries out the reaction 2 a 1,2-diacyl-sn-glycero-3-phospho-(1'-sn-glycerol) = a cardiolipin + glycerol. Its function is as follows. Catalyzes the reversible phosphatidyl group transfer from one phosphatidylglycerol molecule to another to form cardiolipin (CL) (diphosphatidylglycerol) and glycerol. The chain is Cardiolipin synthase 1 (cls1) from Staphylococcus epidermidis (strain ATCC 12228 / FDA PCI 1200).